The chain runs to 37 residues: Large ribosomal subunit protein bL36c (37 aa).

It belongs to the bacterial ribosomal protein bL36 family.

Its subcellular location is the plastid. It localises to the chloroplast. The polypeptide is Large ribosomal subunit protein bL36c (Acorus calamus (Sweet flag)).